Reading from the N-terminus, the 173-residue chain is Co-chaperone protein HscB homolog (173 aa).

Residues 5–77 (CHFALFELQP…PKRARYLLAM (73 aa)) form the J domain.

The protein belongs to the HscB family. In terms of assembly, interacts with HscA and stimulates its ATPase activity.

Co-chaperone involved in the maturation of iron-sulfur cluster-containing proteins. Seems to help targeting proteins to be folded toward HscA. This is Co-chaperone protein HscB homolog from Pseudomonas fluorescens (strain SBW25).